We begin with the raw amino-acid sequence, 459 residues long: Cysteine--tRNA ligase (459 aa).

C31 serves as a coordination point for Zn(2+). A 'HIGH' region motif is present at residues 33 to 43; that stretch reads PTVYYNPHIGN. 3 residues coordinate Zn(2+): C216, H241, and E245. Residues 274–278 carry the 'KMSKS' region motif; sequence KMSKS. Residue K277 coordinates ATP.

Belongs to the class-I aminoacyl-tRNA synthetase family. In terms of assembly, monomer. Zn(2+) serves as cofactor.

It localises to the cytoplasm. The enzyme catalyses tRNA(Cys) + L-cysteine + ATP = L-cysteinyl-tRNA(Cys) + AMP + diphosphate. The polypeptide is Cysteine--tRNA ligase (Rickettsia conorii (strain ATCC VR-613 / Malish 7)).